The following is a 468-amino-acid chain: Glucose-dependent insulinotropic receptor (468 aa).

At 1–6 (MESSFS) the chain is on the extracellular side. The chain crosses the membrane as a helical span at residues 7-27 (FGVILAVLTILIIAVNALVVV). Residues 28–37 (AMLLSIYKND) are Cytoplasmic-facing. The chain crosses the membrane as a helical span at residues 38 to 58 (GVGLCFTLNLAVADTLIGVAI). At 59–81 (SGLVTDQLSSSAQHTQKTLCSLR) the chain is on the extracellular side. The helical transmembrane segment at 82 to 102 (MAFVTSSAAASVLTVMLIAFD) threads the bilayer. The Cytoplasmic portion of the chain corresponds to 103 to 125 (RYLAIKQPLRYFQIMNGLVAGGC). A helical membrane pass occupies residues 126–146 (IAGLWLISYLIGFLPLGVSIF). Residues 147–164 (QQTTYHGPCTFFAVFHPR) lie on the Extracellular side of the membrane. Residues 165 to 185 (FVLTLSCAGFFPAVLLFVFFY) form a helical membrane-spanning segment. Over 186 to 226 (CDMLKIASVHSQHIRKMEHAGAMVGACRPPRPVNDFKAVRT) the chain is Cytoplasmic. A helical membrane pass occupies residues 227–247 (VSVLIGSFTLSWSPFLITSIV). Residues 248–262 (QVACHKCCLYQVLEK) are Extracellular-facing. A helical membrane pass occupies residues 263–283 (YLWLLGVGNSLLNPLIYAYWQ). Residues 284–468 (REVRQQLCHM…MSDPLRTCRG (185 aa)) are Cytoplasmic-facing.

This sequence belongs to the G-protein coupled receptor 1 family. In terms of tissue distribution, expression restricted to the beta-cells of pancreatic islets.

Its subcellular location is the cell membrane. In terms of biological role, receptor for the endogenous fatty-acid ethanolamide oleoylethanolamide (OEA) and lysophosphatidylcholine (LPC). Functions as a glucose-dependent insulinotropic receptor. The activity of this receptor is mediated by G proteins which activate adenylate cyclase. Seems to act through a G(s) mediated pathway. In Rattus norvegicus (Rat), this protein is Glucose-dependent insulinotropic receptor (Gpr119).